Consider the following 132-residue polypeptide: Agouti-signaling protein (132 aa).

Residues 1–22 (MDVTRLVLATLLVFLCFFAAYS) form the signal peptide. The N-linked (GlcNAc...) asparagine glycan is linked to Asn-39. The segment at 60–93 (KKISRKEAEKRRSSKKEASKQKVARPRTPLSVPC) is disordered. Over residues 64–79 (RKEAEKRRSSKKEASK) the composition is skewed to basic and acidic residues. Disulfide bonds link Cys-93–Cys-108, Cys-100–Cys-114, Cys-107–Cys-125, Cys-111–Cys-132, and Cys-116–Cys-123. Residues 93–132 (CVSTRGSCKPPAPACCHPCASCQCRFFRSACSCRVLNVNC) enclose the Agouti domain.

Its subcellular location is the secreted. Functionally, involved in the regulation of melanogenesis. The binding of ASP to MC1R precludes alpha-MSH initiated signaling and thus blocks production of cAMP, leading to a down-regulation of eumelanogenesis (brown/black pigment) and thus increasing synthesis of pheomelanin (yellow/red pigment). This chain is Agouti-signaling protein (ASIP), found in Cebuella pygmaea (Pygmy marmoset).